We begin with the raw amino-acid sequence, 386 residues long: Succinate--CoA ligase [ADP-forming] subunit beta (386 aa).

Residues 9–244 (KELLKQFGVT…LDEEDPAEIE (236 aa)) enclose the ATP-grasp domain. ATP contacts are provided by residues lysine 46, 53–55 (GRG), glutamate 99, alanine 102, and glutamate 107. Residues asparagine 199 and aspartate 213 each coordinate Mg(2+). Substrate is bound by residues asparagine 264 and 321-323 (GIM).

It belongs to the succinate/malate CoA ligase beta subunit family. As to quaternary structure, heterotetramer of two alpha and two beta subunits. Mg(2+) serves as cofactor.

The enzyme catalyses succinate + ATP + CoA = succinyl-CoA + ADP + phosphate. It catalyses the reaction GTP + succinate + CoA = succinyl-CoA + GDP + phosphate. Its pathway is carbohydrate metabolism; tricarboxylic acid cycle; succinate from succinyl-CoA (ligase route): step 1/1. Its function is as follows. Succinyl-CoA synthetase functions in the citric acid cycle (TCA), coupling the hydrolysis of succinyl-CoA to the synthesis of either ATP or GTP and thus represents the only step of substrate-level phosphorylation in the TCA. The beta subunit provides nucleotide specificity of the enzyme and binds the substrate succinate, while the binding sites for coenzyme A and phosphate are found in the alpha subunit. In Bordetella pertussis (strain Tohama I / ATCC BAA-589 / NCTC 13251), this protein is Succinate--CoA ligase [ADP-forming] subunit beta.